Here is a 440-residue protein sequence, read N- to C-terminus: NADH-quinone oxidoreductase subunit D (440 aa).

The protein belongs to the complex I 49 kDa subunit family. As to quaternary structure, NDH-1 is composed of 14 different subunits. Subunits NuoB, C, D, E, F, and G constitute the peripheral sector of the complex.

It localises to the cell membrane. The catalysed reaction is a quinone + NADH + 5 H(+)(in) = a quinol + NAD(+) + 4 H(+)(out). NDH-1 shuttles electrons from NADH, via FMN and iron-sulfur (Fe-S) centers, to quinones in the respiratory chain. The immediate electron acceptor for the enzyme in this species is believed to be a menaquinone. Couples the redox reaction to proton translocation (for every two electrons transferred, four hydrogen ions are translocated across the cytoplasmic membrane), and thus conserves the redox energy in a proton gradient. In Mycobacterium bovis (strain ATCC BAA-935 / AF2122/97), this protein is NADH-quinone oxidoreductase subunit D.